Here is a 396-residue protein sequence, read N- to C-terminus: Probable sugar efflux transporter (396 aa).

12 helical membrane passes run 15-35, 50-70, 81-101, 103-123, 136-156, 170-190, 209-229, 246-266, 275-295, 299-319, 333-353, and 364-384; these read VVTLAVAAFIFNTTEFVPVGL, VGIMLTIYAWVVALMSLPFML, LICLFVVFIASHVLSFLSWSF, VLVISRIGVAFAHAIFWSITA, AQALSLIATGTALAMVLGLPL, FFAIGIGALITLLCLIKLLPL, PALMSIYLLTVVVVTAHYTAY, FATALLLLLGGAGIIGSVIFG, ALVSTAIALLLVCLALLLPAA, IHLGVLSIFWGIAMMLIGLGM, VAMALFSGIFNIGIGAGALVG, and MIGYVGAVPAFAALIWSIIIF.

The protein belongs to the major facilitator superfamily. SotB (TC 2.A.1.2) family.

The protein localises to the cell inner membrane. Its function is as follows. Involved in the efflux of sugars. The physiological role may be the reduction of the intracellular concentration of toxic sugars or sugar metabolites. This is Probable sugar efflux transporter from Shigella boydii serotype 18 (strain CDC 3083-94 / BS512).